The primary structure comprises 567 residues: Urease subunit alpha (567 aa).

The Urease domain occupies 129-567 (GGVDSHIHFI…LPLAQRYFLF (439 aa)). Residues H134, H136, and K217 each contribute to the Ni(2+) site. An N6-carboxylysine modification is found at K217. A substrate-binding site is contributed by H219. Ni(2+) is bound by residues H246 and H272. H320 acts as the Proton donor in catalysis. A Ni(2+)-binding site is contributed by D360.

Belongs to the metallo-dependent hydrolases superfamily. Urease alpha subunit family. Heterotrimer of UreA (gamma), UreB (beta) and UreC (alpha) subunits. Three heterotrimers associate to form the active enzyme. Ni cation is required as a cofactor. Carboxylation allows a single lysine to coordinate two nickel ions.

Its subcellular location is the cytoplasm. The enzyme catalyses urea + 2 H2O + H(+) = hydrogencarbonate + 2 NH4(+). It participates in nitrogen metabolism; urea degradation; CO(2) and NH(3) from urea (urease route): step 1/1. In Pseudomonas putida (strain ATCC 700007 / DSM 6899 / JCM 31910 / BCRC 17059 / LMG 24140 / F1), this protein is Urease subunit alpha.